Here is a 568-residue protein sequence, read N- to C-terminus: Oxygen-dependent choline dehydrogenase (568 aa).

Residue 8–37 (DYIIIGAGSAGNTLAARLTEDAGVTVLLLE) coordinates FAD. Catalysis depends on H477, which acts as the Proton acceptor.

This sequence belongs to the GMC oxidoreductase family. FAD serves as cofactor.

It carries out the reaction choline + A = betaine aldehyde + AH2. The catalysed reaction is betaine aldehyde + NAD(+) + H2O = glycine betaine + NADH + 2 H(+). It functions in the pathway amine and polyamine biosynthesis; betaine biosynthesis via choline pathway; betaine aldehyde from choline (cytochrome c reductase route): step 1/1. In terms of biological role, involved in the biosynthesis of the osmoprotectant glycine betaine. Catalyzes the oxidation of choline to betaine aldehyde and betaine aldehyde to glycine betaine at the same rate. The sequence is that of Oxygen-dependent choline dehydrogenase from Pseudomonas syringae pv. syringae (strain B728a).